A 279-amino-acid polypeptide reads, in one-letter code: Tryptophan synthase alpha chain (279 aa).

Catalysis depends on proton acceptor residues E50 and D61.

It belongs to the TrpA family. Tetramer of two alpha and two beta chains.

It carries out the reaction (1S,2R)-1-C-(indol-3-yl)glycerol 3-phosphate + L-serine = D-glyceraldehyde 3-phosphate + L-tryptophan + H2O. The protein operates within amino-acid biosynthesis; L-tryptophan biosynthesis; L-tryptophan from chorismate: step 5/5. The alpha subunit is responsible for the aldol cleavage of indoleglycerol phosphate to indole and glyceraldehyde 3-phosphate. The protein is Tryptophan synthase alpha chain of Brucella melitensis biotype 1 (strain ATCC 23456 / CCUG 17765 / NCTC 10094 / 16M).